The chain runs to 855 residues: Homeobox-leucine zipper protein HOX33 (855 aa).

Residues 1 to 21 (MAAAAVGGRGERLSSSSPTAA) are disordered. Residues 26 to 89 (DAGKYVRYTP…NRRCREKQRK (64 aa)) constitute a DNA-binding region (homeobox). Residues 84 to 126 (REKQRKEASRLQTVNRKLNAMNKLLMEENDRLQKQVSRLVYEN) are a coiled coil. An START domain is found at 168-390 (DANNPAGLLA…LRHIRQIAHE (223 aa)).

This sequence belongs to the HD-ZIP homeobox family. Class III subfamily. As to expression, expressed in seedlings, roots, stems, leaf sheaths and blades and panicles.

It localises to the nucleus. Probable transcription factor. This Oryza sativa subsp. indica (Rice) protein is Homeobox-leucine zipper protein HOX33 (HOX33).